A 1398-amino-acid chain; its full sequence is DNA topoisomerase 2 (1398 aa).

ATP contacts are provided by residues asparagine 69, asparagine 103, serine 131–asparagine 133, and glycine 144–lysine 151. Positions asparagine 260–aspartate 317 are disordered. Residues asparagine 267–asparagine 291 show a composition bias toward low complexity. An ATP-binding site is contributed by glutamine 411–lysine 413. Residues cysteine 493–serine 608 enclose the Toprim domain. 3 residues coordinate Mg(2+): glutamate 499, aspartate 577, and aspartate 579. Residues isoleucine 739–isoleucine 1191 form the Topo IIA-type catalytic domain. Tyrosine 830 serves as the catalytic O-(5'-phospho-DNA)-tyrosine intermediate. Residues lysine 1012–asparagine 1021 form an interaction with DNA region. Disordered stretches follow at residues lysine 1214–serine 1250 and asparagine 1262–isoleucine 1361. Low complexity predominate over residues asparagine 1262 to asparagine 1276. 2 stretches are compositionally biased toward polar residues: residues leucine 1287–lysine 1300 and aspartate 1348–leucine 1357.

Belongs to the type II topoisomerase family. Homodimer. The cofactor is Mg(2+). Mn(2+) serves as cofactor. It depends on Ca(2+) as a cofactor.

The protein resides in the nucleus. The enzyme catalyses ATP-dependent breakage, passage and rejoining of double-stranded DNA.. Control of topological states of DNA by transient breakage and subsequent rejoining of DNA strands. Topoisomerase II makes double-strand breaks. The chain is DNA topoisomerase 2 (TOP2) from Plasmodium falciparum (isolate K1 / Thailand).